A 1038-amino-acid polypeptide reads, in one-letter code: Kinesin-like protein KIF17 (1038 aa).

Residues 5-335 form the Kinesin motor domain; sequence SVKVVVRCRP…LRYANRAKNI (331 aa). 91–98 contributes to the ATP binding site; the sequence is GQTGSGKS. The stretch at 346–470 forms a coiled coil; that stretch reads KDALLREYQE…ETEAILKAEV (125 aa). Disordered regions lie at residues 379–401, 503–559, and 636–657; these read TQTP…VQQD, LSMP…GPEE, and DSSQ…LLEP. Polar residues-rich tracts occupy residues 533-551 and 636-651; these read SEFS…SATS and DSSQ…QPSS. Positions 748-855 form a coiled coil; it reads QQVLARLQLL…QLEKIDYLAT (108 aa). Disordered stretches follow at residues 916–940 and 976–1038; these read VVPT…PHMQ and MKSL…GEPL. Over residues 983-1000 the composition is skewed to low complexity; it reads NSPPGLNSSLSNNSALPP.

The protein belongs to the TRAFAC class myosin-kinesin ATPase superfamily. Kinesin family. In terms of assembly, homodimer. Interacts with APBA1 (via PDZ domain); the interaction is direct and is required for association of KIF17 with the cargo that is to be transported. Interacts with IFT B complex components IFT52 and IFT57. Interacts with IFT70B. Interacts with PIWIL1. Interacts with TBATA. As to expression, highly expressed in the gray matter of the brain, especially in the hippocampus.

It localises to the cytoplasm. It is found in the cytoskeleton. The protein resides in the cell projection. Its subcellular location is the cilium. The protein localises to the dendrite. Its function is as follows. Dendrite-specific motor protein which, in association with the Apba1-containing complex (LIN-10-LIN-2-LIN-7 complex), transports vesicles containing N-methyl-D-aspartate (NMDA) receptor subunit NR2B along microtubules. The sequence is that of Kinesin-like protein KIF17 (Kif17) from Mus musculus (Mouse).